Here is a 317-residue protein sequence, read N- to C-terminus: Metaxin-1 (317 aa).

Residues lysine 38, lysine 41, and lysine 78 each participate in a glycyl lysine isopeptide (Lys-Gly) (interchain with G-Cter in ubiquitin) cross-link. Residues 164-184 traverse the membrane as a helical segment; that stretch reads EELEKELYREARECLTLLSQR.

It belongs to the metaxin family. In terms of assembly, interacts with MTX2/metaxin-2. Associates with the mitochondrial contact site and cristae organizing system (MICOS) complex, composed of at least MICOS10/MIC10, CHCHD3/MIC19, CHCHD6/MIC25, APOOL/MIC27, IMMT/MIC60, APOO/MIC23/MIC26 and QIL1/MIC13. This complex was also known under the names MINOS or MitOS complex. The MICOS complex associates with mitochondrial outer membrane proteins SAMM50, MTX1 and MTX2 (together described as components of the mitochondrial outer membrane sorting assembly machinery (SAM) complex) and DNAJC11, mitochondrial inner membrane protein TMEM11 and with HSPA9. The MICOS and SAM complexes together with DNAJC11 are part of a large protein complex spanning both membranes termed the mitochondrial intermembrane space bridging (MIB) complex. Interacts with ARMC1. Post-translationally, ubiquitinated by PRKN during mitophagy, leading to its degradation and enhancement of mitophagy. Deubiquitinated by USP30.

The protein localises to the mitochondrion outer membrane. Involved in transport of proteins into the mitochondrion. Essential for embryonic development. The chain is Metaxin-1 (MTX1) from Macaca fascicularis (Crab-eating macaque).